We begin with the raw amino-acid sequence, 499 residues long: Lanosterol 14-alpha demethylase (499 aa).

A helical membrane pass occupies residues 13 to 35 (SAVLQMSLTSVLLTASVFTLTLG). C441 serves as a coordination point for heme.

Belongs to the cytochrome P450 family. Requires heme as cofactor. As to expression, strongly expressed in intestine. Moderately expressed in liver, with higher levels in females compared to males. Also detected at low levels in brain, eye, kidney and testis.

The protein resides in the endoplasmic reticulum membrane. It is found in the membrane. It carries out the reaction a 14alpha-methyl steroid + 3 reduced [NADPH--hemoprotein reductase] + 3 O2 = a Delta(14) steroid + formate + 3 oxidized [NADPH--hemoprotein reductase] + 4 H2O + 4 H(+). The enzyme catalyses lanosterol + 3 reduced [NADPH--hemoprotein reductase] + 3 O2 = 4,4-dimethyl-5alpha-cholesta-8,14,24-trien-3beta-ol + formate + 3 oxidized [NADPH--hemoprotein reductase] + 4 H2O + 4 H(+). The catalysed reaction is 24,25-dihydrolanosterol + 3 reduced [NADPH--hemoprotein reductase] + 3 O2 = 4,4-dimethyl-8,14-cholestadien-3beta-ol + formate + 3 oxidized [NADPH--hemoprotein reductase] + 4 H2O + 4 H(+). It catalyses the reaction a 14alpha-methyl steroid + reduced [NADPH--hemoprotein reductase] + O2 = a 14alpha-hydroxymethyl steroid + oxidized [NADPH--hemoprotein reductase] + H2O + H(+). It carries out the reaction a 14alpha-hydroxymethyl steroid + reduced [NADPH--hemoprotein reductase] + O2 = a 14alpha-formyl steroid + oxidized [NADPH--hemoprotein reductase] + 2 H2O + H(+). The enzyme catalyses a 14alpha-formyl steroid + reduced [NADPH--hemoprotein reductase] + O2 = a Delta(14) steroid + formate + oxidized [NADPH--hemoprotein reductase] + H2O + 2 H(+). The catalysed reaction is lanosterol + reduced [NADPH--hemoprotein reductase] + O2 = 32-hydroxylanosterol + oxidized [NADPH--hemoprotein reductase] + H2O + H(+). It catalyses the reaction 32-hydroxylanosterol + reduced [NADPH--hemoprotein reductase] + O2 = 32-oxolanosterol + oxidized [NADPH--hemoprotein reductase] + 2 H2O + H(+). It carries out the reaction 32-oxolanosterol + reduced [NADPH--hemoprotein reductase] + O2 = 4,4-dimethyl-5alpha-cholesta-8,14,24-trien-3beta-ol + formate + oxidized [NADPH--hemoprotein reductase] + H2O + 2 H(+). The enzyme catalyses 24,25-dihydrolanosterol + reduced [NADPH--hemoprotein reductase] + O2 = 32-hydroxy-24,25-dihydrolanosterol + oxidized [NADPH--hemoprotein reductase] + H2O + H(+). The catalysed reaction is 32-hydroxy-24,25-dihydrolanosterol + reduced [NADPH--hemoprotein reductase] + O2 = 32-oxo-24,25-dihydrolanosterol + oxidized [NADPH--hemoprotein reductase] + 2 H2O + H(+). It catalyses the reaction 32-oxo-24,25-dihydrolanosterol + reduced [NADPH--hemoprotein reductase] + O2 = 4,4-dimethyl-8,14-cholestadien-3beta-ol + formate + oxidized [NADPH--hemoprotein reductase] + H2O + 2 H(+). It functions in the pathway steroid biosynthesis; zymosterol biosynthesis; zymosterol from lanosterol: step 1/6. With respect to regulation, inhibited by ketoconazole. May also be inhibited to a lesser extent by propiconazole. In terms of biological role, sterol 14alpha-demethylase that plays a critical role in the cholesterol biosynthesis pathway, being cholesterol the major sterol component in deuterostome membranes as well as a precursor for steroid hormone synthesis. Cytochrome P450 monooxygenase that catalyzes the three-step oxidative removal of the 14alpha-methyl group (C-32) of sterols such as lanosterol (lanosta-8,24-dien-3beta-ol) and 24,25-dihydrolanosterol (DHL) in the form of formate, and converts the sterols to 4,4-dimethyl-5alpha-cholesta-8,14,24-trien-3beta-ol and 4,4-dimethyl-8,14-cholestadien-3beta-ol, respectively, which are intermediates of cholesterol biosynthesis. Can also demethylate substrates not intrinsic to deuterostomes, such as eburicol (24-methylene-24,25-dihydrolanosterol), but at a lower rate than DHL. This chain is Lanosterol 14-alpha demethylase, found in Danio rerio (Zebrafish).